The chain runs to 1958 residues: MEFPFGSVGTTNFRRFTPESLAEIEKQIAAHRAAKKGRPKQRGQKDKSEKPRPQLDLKACNQLPRFYGELPAELVGEPLEDLDPFYSTHRTFIVLDKSRTISRFSATWALWLFSPFNLIRRTAIKVSVHSWFSIFITVTILVNCVCMTRTDLPEKLEYAFTVVYTFEALIKILARGFCLNEFTYLRDPWNWLDFSVITLAYVGAAIDLRGISGLRTFRVLRALKTVSVIPGLKVIVGALIHSVRKLADVTILTVFCLSVFALVGLQLFKGNLKNKCIKNGTDPHKADNLSSEMAGDIFIKPGTTDPLLCGNGSDAGHCPNDYVCRKTSDNPDFNYTSFDSFAWAFLSLFRLMTQDSWERLYQQTLRASGKMYMVFFVLVIFLGSFYLVNLILAVVTMAYEEQSQATIAEIEAKEKKFKEALEVLQKEQEVLAALGIDTTSLYSHNGSPLAPKNANERRPRVKSRMSEGSTDDNRSLQSDPYNQRRMSFLGLSSGRRRASHSSVFHFRAPSQDVSFPDGILDDGVFHGDQESRRSSILLGRGAGQAGPLPRSPLPQSPNPGPRRGEEGQRGVPTGELATGAPEGPALDAAGQKNFLSADYLNEPFRAQRAMSVVSIMTSVIEELEESKLKCPPCLISLAQKYLIWECCPKWKKFKMVLFELVTDPFAELTITLCIVVNTVFMAMEHYPMTDAFDAMLQAGNIVFTVFFTMEMAFKIIAFDPYYYFQKKWNIFDCVIVTVSLLELSTSKKGSLSVLRTFRLLRVFKLAKSWPTLNMLIKIIGNSVGALGNLTFILAIIVFIFALVGKQLLSENYGCRRDGISVWNGERLRWHMCDFFHSFLVVFRILCGEWIENMWVCMEVSQDYICLTLFLTVMVLGNLVVLNLFIALLLNSFSADNLTAPEDDGEVNNLQVALARIQVFGHRASRAITSYIRSHCRLRWPKVETQLGMKPPLTSCKAENHIATDAVNAAVGNLAKPALGGPKENHGDFITDPNVWVSVPIAEGESDLDELEEDVEHASQSSWQEESPKGQQELLQQVQKCEDHQAARSPPSGMSSEDLAPYLGERWQREESPRVPAEGVDDTSSSEGSTVDCPDPEEILRKIPELAEELDEPDDCFPEGCTRRCPCCKVNTSKFPWATGWQVRKTCYRIVEHSWFESFIIFMILLSSGALAFEDNYLEEKPRVKSVLEYTDRVFTFIFVFEMLLKWVAYGFKKYFTNAWCWLDFLIVNISLTSLIAKILEYSDVASIKALRTLRALRPLRALSRFEGMRVVVDALVGAIPSIMNVLLVCLIFWLIFSIMGVNLFAGKFSRCVDTRSNPFSVVNSTFVTNKSDCYNQNNTGHFFWVNVKVNFDNVAMGYLALLQVATFKGWMDIMYAAVDSRDINSQPNWEESLYMYLYFVVFIIFGGFFTLNLFVGVIIDNFNQQKKKLGGQDIFMTEEQKKYYNAMKKLGSKKPQKPIPRPLNKYQGFVFDIVTRQAFDIIIMALICLNMITMMVETDNQSEEKTKVLGRINQFFVAVFTGECVMKMFALRQYYFTNGWNVFDFIVVILSISSLLFSAILSSLESYFSPTLLRVIRLARIGRILRLIRAAKGIRTLLFALMMSLPALFNIGLLLFLVMFIYSIFGMASFANVIDEAGIDDMFNFKTFGNSMLCLFQITTSAGWDGLLSPILNTGPPYCDPNRPNSNGSKGNCGSPAVGILFFTTYIIISFLIVVNMYIAVILENFNVATEESTEPLSEDDFDMFYETWEKFDPEATQFIAFSALSDFADTLSGPLRIPKPNQNILIQMDLPLVPGDKIHCLDILFAFTKNVLGESGELDSLKTNMEEKFMATNLSKASYEPIATTLRCKQEDISATIIQKAYRNYMLQRSLMLSNPLHVPRAEEDGVSLPREGYVTFMANDNGGLPDKSETASATSFPPSYDSVTRGLSDRANISTSSSMQNEDEVTAKEGKSPGPQ.

Over 1 to 125 (MEFPFGSVGT…FNLIRRTAIK (125 aa)) the chain is Cytoplasmic. The interval 27-54 (QIAAHRAAKKGRPKQRGQKDKSEKPRPQ) is disordered. The span at 32-42 (RAAKKGRPKQR) shows a compositional bias: basic residues. Residues 43 to 54 (GQKDKSEKPRPQ) are compositionally biased toward basic and acidic residues. The stretch at 116-404 (FNLIRRTAIK…VTMAYEEQSQ (289 aa)) is one I repeat. The chain crosses the membrane as a helical span at residues 126–149 (VSVHSWFSIFITVTILVNCVCMTR). The Extracellular segment spans residues 150–154 (TDLPE). Residues 155 to 174 (KLEYAFTVVYTFEALIKILA) form a helical membrane-spanning segment. Over 175-187 (RGFCLNEFTYLRD) the chain is Cytoplasmic. The chain crosses the membrane as a helical span at residues 188–206 (PWNWLDFSVITLAYVGAAI). Topologically, residues 207–212 (DLRGIS) are extracellular. Residues 213–232 (GLRTFRVLRALKTVSVIPGL) form a helical; Voltage-sensor membrane-spanning segment. Residues 233 to 248 (KVIVGALIHSVRKLAD) are Cytoplasmic-facing. The helical transmembrane segment at 249-272 (VTILTVFCLSVFALVGLQLFKGNL) threads the bilayer. At 273–340 (KNKCIKNGTD…PDFNYTSFDS (68 aa)) the chain is on the extracellular side. Cys276 and Cys318 form a disulfide bridge. 4 N-linked (GlcNAc...) asparagine glycosylation sites follow: Asn279, Asn288, Asn311, and Asn334. The pore-forming intramembrane region spans 341–365 (FAWAFLSLFRLMTQDSWERLYQQTL). Topologically, residues 366–372 (RASGKMY) are extracellular. A helical membrane pass occupies residues 373–398 (MVFFVLVIFLGSFYLVNLILAVVTMA). Residues 399–658 (YEEQSQATIA…KWKKFKMVLF (260 aa)) are Cytoplasmic-facing. Residues Ser440, Ser443, Ser466, and Ser478 each carry the phosphoserine modification. 2 disordered regions span residues 444–483 (HNGS…PYNQ) and 539–583 (GRGA…APEG). The span at 549–560 (PRSPLPQSPNPG) shows a compositional bias: pro residues. Phosphoserine is present on residues Ser611 and Ser614. One copy of the II repeat lies at 646 to 910 (CCPKWKKFKM…EDDGEVNNLQ (265 aa)). Residues 659-683 (ELVTDPFAELTITLCIVVNTVFMAM) traverse the membrane as a helical segment. The Extracellular portion of the chain corresponds to 684–694 (EHYPMTDAFDA). The chain crosses the membrane as a helical span at residues 695-718 (MLQAGNIVFTVFFTMEMAFKIIAF). Residues 719-726 (DPYYYFQK) lie on the Cytoplasmic side of the membrane. A helical transmembrane segment spans residues 727-746 (KWNIFDCVIVTVSLLELSTS). The Extracellular segment spans residues 747 to 752 (KKGSLS). Residues 753 to 772 (VLRTFRLLRVFKLAKSWPTL) form a helical; Voltage-sensor membrane-spanning segment. Over 773 to 788 (NMLIKIIGNSVGALGN) the chain is Cytoplasmic. The chain crosses the membrane as a helical span at residues 789–809 (LTFILAIIVFIFALVGKQLLS). Residues 810–833 (ENYGCRRDGISVWNGERLRWHMCD) lie on the Extracellular side of the membrane. The pore-forming intramembrane region spans 834 to 854 (FFHSFLVVFRILCGEWIENMW). The Extracellular segment spans residues 855-863 (VCMEVSQDY). Cys856 and Cys865 are joined by a disulfide. The helical transmembrane segment at 864–889 (ICLTLFLTVMVLGNLVVLNLFIALLL) threads the bilayer. Over 890-1148 (NSFSADNLTA…GWQVRKTCYR (259 aa)) the chain is Cytoplasmic. Positions 1006–1094 (DLDELEEDVE…SEGSTVDCPD (89 aa)) are disordered. The segment covering 1017–1038 (ASQSSWQEESPKGQQELLQQVQ) has biased composition (polar residues). One copy of the III repeat lies at 1141–1450 (QVRKTCYRIV…KKYYNAMKKL (310 aa)). The helical transmembrane segment at 1149 to 1172 (IVEHSWFESFIIFMILLSSGALAF) threads the bilayer. Topologically, residues 1173–1185 (EDNYLEEKPRVKS) are extracellular. A helical membrane pass occupies residues 1186 to 1211 (VLEYTDRVFTFIFVFEMLLKWVAYGF). Residues 1212–1217 (KKYFTN) are Cytoplasmic-facing. The chain crosses the membrane as a helical span at residues 1218–1239 (AWCWLDFLIVNISLTSLIAKIL). The Extracellular portion of the chain corresponds to 1240-1243 (EYSD). The chain crosses the membrane as a helical; Voltage-sensor span at residues 1244 to 1265 (VASIKALRTLRALRPLRALSRF). Residues 1266 to 1284 (EGMRVVVDALVGAIPSIMN) are Cytoplasmic-facing. Residues 1285 to 1312 (VLLVCLIFWLIFSIMGVNLFAGKFSRCV) form a helical membrane-spanning segment. Topologically, residues 1313–1354 (DTRSNPFSVVNSTFVTNKSDCYNQNNTGHFFWVNVKVNFDNV) are extracellular. Asn1323, Asn1329, and Asn1337 each carry an N-linked (GlcNAc...) asparagine glycan. An intramembrane region (pore-forming) is located at residues 1355–1376 (AMGYLALLQVATFKGWMDIMYA). Over 1377–1392 (AVDSRDINSQPNWEES) the chain is Extracellular. The helical transmembrane segment at 1393 to 1419 (LYMYLYFVVFIIFGGFFTLNLFVGVII) threads the bilayer. Topologically, residues 1420-1472 (DNFNQQKKKLGGQDIFMTEEQKKYYNAMKKLGSKKPQKPIPRPLNKYQGFVFD) are cytoplasmic. Ser1452 is modified (phosphoserine; by PKC). The IV repeat unit spans residues 1459–1758 (IPRPLNKYQG…WEKFDPEATQ (300 aa)). A helical transmembrane segment spans residues 1473–1496 (IVTRQAFDIIIMALICLNMITMMV). Topologically, residues 1497-1507 (ETDNQSEEKTK) are extracellular. Residue Asn1500 is glycosylated (N-linked (GlcNAc...) asparagine). Residues 1508-1531 (VLGRINQFFVAVFTGECVMKMFAL) traverse the membrane as a helical segment. Over 1532 to 1537 (RQYYFT) the chain is Cytoplasmic. The helical transmembrane segment at 1538–1561 (NGWNVFDFIVVILSISSLLFSAIL) threads the bilayer. Topologically, residues 1562-1573 (SSLESYFSPTLL) are extracellular. A helical; Voltage-sensor transmembrane segment spans residues 1574–1595 (RVIRLARIGRILRLIRAAKGIR). The Cytoplasmic segment spans residues 1596 to 1610 (TLLFALMMSLPALFN). Residues 1611–1633 (IGLLLFLVMFIYSIFGMASFANV) traverse the membrane as a helical segment. The Extracellular portion of the chain corresponds to 1634–1647 (IDEAGIDDMFNFKT). The segment at residues 1648–1670 (FGNSMLCLFQITTSAGWDGLLSP) is an intramembrane region (pore-forming). The Extracellular segment spans residues 1671 to 1698 (ILNTGPPYCDPNRPNSNGSKGNCGSPAV). Residue Asn1687 is glycosylated (N-linked (GlcNAc...) asparagine). Residues 1699 to 1723 (GILFFTTYIIISFLIVVNMYIAVIL) form a helical membrane-spanning segment. The Cytoplasmic portion of the chain corresponds to 1724-1958 (ENFNVATEES…AKEGKSPGPQ (235 aa)). The IQ domain occupies 1852–1881 (EDISATIIQKAYRNYMLQRSLMLSNPLHVP). Residues 1901 to 1958 (NDNGGLPDKSETASATSFPPSYDSVTRGLSDRANISTSSSMQNEDEVTAKEGKSPGPQ) are disordered. Positions 1933–1942 (ANISTSSSMQ) are enriched in polar residues. The segment covering 1947–1958 (VTAKEGKSPGPQ) has biased composition (basic and acidic residues).

The protein belongs to the sodium channel (TC 1.A.1.10) family. Nav1.8/SCN10A subfamily. In terms of assembly, the channel consists of an ion conducting pore forming alpha-subunit regulated by one or more associated auxiliary subunits SCN1B, SCN2B and SCN3B; electrophysiological properties may vary depending on the type of the associated beta subunits. Found in a number of complexes with PRX, DYNLT1 and PDZD2. Interacts with proteins such as FSTL1, PRX, DYNLT1, PDZD2, S100A10 and many others. Interacts with NEDD4 and NEDD4L. In terms of processing, ubiquitinated by NEDD4L; which promotes its endocytosis. Phosphorylation at Ser-1452 by PKC in a highly conserved cytoplasmic loop slows inactivation of the sodium channel and reduces peak sodium currents. Post-translationally, lacks the cysteine which covalently binds the conotoxin GVIIJ. This cysteine (position 815) is speculated in other sodium channel subunits alpha to be implied in covalent binding with the sodium channel subunit beta-2 or beta-4. Expressed in dorsal root ganglion and trigeminal ganglion.

It is found in the cell membrane. The enzyme catalyses Na(+)(in) = Na(+)(out). Tetrodotoxin-resistant channel that mediates the voltage-dependent sodium ion permeability of excitable membranes. Assuming opened or closed conformations in response to the voltage difference across the membrane, the protein forms a sodium-selective channel through which sodium ions may pass in accordance with their electrochemical gradient. Plays a role in neuropathic pain mechanisms. This Mus musculus (Mouse) protein is Sodium channel protein type 10 subunit alpha.